The sequence spans 524 residues: 11-oxo-beta-amyrin 30-oxidase (524 aa).

The chain crosses the membrane as a helical span at residues 9-29 (GTTVIISVLSVLLAVIPWYLL). Cysteine 472 is a binding site for heme.

Belongs to the cytochrome P450 family. Requires heme as cofactor. In terms of tissue distribution, expressed in flowers. Detected in roots upon salt treatment.

The protein localises to the membrane. The enzyme catalyses 11-oxo-beta-amyrin + 3 reduced [NADPH--hemoprotein reductase] + 3 O2 = glycyrrhetinate + 3 oxidized [NADPH--hemoprotein reductase] + 4 H2O + 4 H(+). Involved in the biosynthesis of triterpenoid saponins. Catalyzes three sequential oxidation steps at C-30 of 11-oxo-beta-amyrin. Also able to catalyze sequential C-30 hydroxylation of beta-amyrin to produce 30-hydroxy-beta-amyrin and 11-deoxoglycyrrhetinic acid. This is 11-oxo-beta-amyrin 30-oxidase (CYP72A63) from Medicago truncatula (Barrel medic).